A 251-amino-acid chain; its full sequence is HTH-type transcriptional regulator UlaR (251 aa).

Residues 3 to 58 (EAQRHQILLEMLAQLGFVTVEKVVERLGISPATARRDINKLDESGKLKKVRNGAEA) enclose the HTH deoR-type domain. Residues 20–39 (VTVEKVVERLGISPATARRD) constitute a DNA-binding region (H-T-H motif).

The protein resides in the cytoplasm. Its function is as follows. Represses ulaG and the ulaABCDEF operon. In Escherichia coli O139:H28 (strain E24377A / ETEC), this protein is HTH-type transcriptional regulator UlaR.